The primary structure comprises 1107 residues: Rho GTPase-activating protein 45 (1107 aa).

Positions 1–99 (MFSRKKRELM…SPPESGEGPF (99 aa)) are disordered. Residues 37–55 (DSSNDLASSPPSNSSPVSS) show a composition bias toward low complexity. Positions 56–66 (GTLKRPSSLSR) are enriched in polar residues. Coiled coils occupy residues 103–132 (EDIS…EELK) and 363–485 (NMRR…QSDQ). The region spanning 261 to 524 (EDVDVILQRS…SSKLYDLGQQ (264 aa)) is the F-BAR domain. 3 stretches are compositionally biased toward basic and acidic residues: residues 414 to 423 (NATRAEEEQS), 434 to 444 (RRAEEEAKNRA), and 573 to 588 (ENKE…ERRG). Disordered regions lie at residues 414-444 (NATR…KNRA) and 564-595 (FNSQ…HQVH). The Phorbol-ester/DAG-type zinc finger occupies 671-716 (THRLRKLRTPSKCRECNSYVYFQGAECEECSLACHKKCLETLAIQC). The 213-residue stretch at 730–942 (RDFSETALRS…TLIIFYSTIF (213 aa)) folds into the Rho-GAP domain. Positions 981 to 1036 (LTPEYQIPVFKEPGASTVESDSESDGAEDIPGTWKPQTTRGHLTKEASVTSAEDIP) are disordered. Positions 1015–1031 (KPQTTRGHLTKEASVTS) are enriched in polar residues.

Its subcellular location is the cytoplasm. It is found in the cell projection. It localises to the ruffle membrane. Functionally, contains a GTPase activator for the Rho-type GTPases (RhoGAP) domain that would be able to negatively regulate the actin cytoskeleton as well as cell spreading. However, also contains N-terminally a BAR-domin which is able to play an autoinhibitory effect on this RhoGAP activity. This chain is Rho GTPase-activating protein 45, found in Xenopus laevis (African clawed frog).